The primary structure comprises 247 residues: MEYQSSVENLDEDGYTQLDFSSRNITRRSVVSEKGLCAASSHWRLIAVTLGILCSVMLVITVVLSTSGIWRSSSGNNLLKSDSFPSRNKDNQSQPTQSSLEDSVIPTKALTTTGVFSSSCPPNWITHEDSCYLFSTLLDSWDGSKRQCFQLGSHLLKIDSSKELEFISRQVSSQPDHSFWIGLSRRQTEEPWLWEDGSTLLSNLFQIRSTVTEKDSSHNCAWIHVSDIYDQLCSVHSYSICEKKLSV.

Over methionine 1–arginine 44 the chain is Cytoplasmic. The short motif at tyrosine 15–leucine 18 is the ITAM-like element. A helical; Signal-anchor for type II membrane protein membrane pass occupies residues leucine 45–serine 65. Residues threonine 66–valine 247 are Extracellular-facing. The span at serine 81–glutamate 101 shows a compositional bias: polar residues. Residues serine 81 to serine 103 are disordered. Asparagine 91 carries N-linked (GlcNAc...) asparagine glycosylation. Disulfide bonds link cysteine 120/cysteine 131, cysteine 148/cysteine 241, and cysteine 220/cysteine 233. Residues histidine 127 to glutamate 242 enclose the C-type lectin domain. Arginine 146–serine 153 provides a ligand contact to (1,3-beta-D-glucosyl)n. Residues lysine 157, aspartate 159, and glutamate 163 each contribute to the a divalent metal cation site. Glutamate 195 contacts (1,3-beta-D-glucosyl)n. Position 242 (glutamate 242) interacts with a divalent metal cation.

Homodimer. Interacts with SYK; participates in leukocyte activation in presence of fungal pathogens. Interacts with CD37; this interaction controls CLEC7A-mediated IL-6 production. Phosphorylated on tyrosine residues in response to beta-glucan binding. In terms of tissue distribution, detected in bone marrow, monocytes, macrophages, dendritic cells and natural killer cells.

It localises to the cell membrane. Lectin that functions as a pattern recognizing receptor (PRR) specific for beta-1,3-linked and beta-1,6-linked glucans, which constitute cell wall constituents from pathogenic bacteria and fungi. Necessary for the TLR2-mediated inflammatory response and activation of NF-kappa-B: upon beta-glucan binding, recruits SYK via its ITAM motif and promotes a signaling cascade that activates some CARD domain-BCL10-MALT1 (CBM) signalosomes, leading to the activation of NF-kappa-B and MAP kinase p38 (MAPK11, MAPK12, MAPK13 and/or MAPK14) pathways which stimulate expression of genes encoding pro-inflammatory cytokines and chemokines. Enhances cytokine production in macrophages and dendritic cells. Mediates production of reactive oxygen species in the cell. Mediates phagocytosis of C.albicans conidia. Binds T-cells in a way that does not involve their surface glycans and plays a role in T-cell activation. Stimulates T-cell proliferation. Induces phosphorylation of SCIMP after binding beta-glucans. The chain is C-type lectin domain family 7 member A (CLEC7A) from Bos taurus (Bovine).